A 279-amino-acid polypeptide reads, in one-letter code: MKYIGAHVSAAGGIELAVERAVAIGANAFALFTKNQRQWHAPDLTAKTILAFRTACETAGFLPEQILPHDSYLINLGHPEPEALEKSRVAFIDEMQRCEQLGLCYLNFHPGSHLKAISEEESLRRVAESINIALDQTQGVTAVIENTAGQGTNLGWQFEHLAAIIDQVEDKSRVGVCYDTCHAFAAGYDMRTEADCIATFAEFERVVGFNYLKGMHINGAKCTFGSRVDRHHSLQEGNLGTAVFEFIMRDSRFDRIPLILETVNPDIWPDEIRWLRQLG.

His69, His109, Glu145, Asp179, His182, His216, Asp229, His231, and Glu261 together coordinate Zn(2+).

The protein belongs to the AP endonuclease 2 family. It depends on Zn(2+) as a cofactor.

It catalyses the reaction Endonucleolytic cleavage to 5'-phosphooligonucleotide end-products.. Functionally, endonuclease IV plays a role in DNA repair. It cleaves phosphodiester bonds at apurinic or apyrimidinic (AP) sites, generating a 3'-hydroxyl group and a 5'-terminal sugar phosphate. The polypeptide is Probable endonuclease 4 (Tolumonas auensis (strain DSM 9187 / NBRC 110442 / TA 4)).